The following is a 469-amino-acid chain: Lactonohydrolase oryH (469 aa).

The signal sequence occupies residues 1-20 (MYLSLRLVSLALCIAPLASA).

Belongs to the SMP-30/CGR1 family.

It functions in the pathway secondary metabolite biosynthesis. Functionally, lactonohydrolase; part of the gene cluster that mediates the biosynthesis of oryzines, natural products with an unusual maleidride backbone. The two subunits of the fungal fatty acid synthase oryfasA and oryfasB probably form octenoic acid. This fatty acid is most likely activated by the acyl-CoA ligase oryP to give octenyl-CoA before the citrate synthase-like protein oryE catalyzes condensation with oxaloacetate to form tricarboxylic acid. The next steps of the pathways are conjectural, but a favorite possible route has been proposed, beginning with decarboxylation and concomitant dehydration by the decarboxylase oryM, followed by tautomerization, which may lead to the production of a diene intermediate. Reduction of this diene intermediate could give the known metabolite piliformic acid. On the pathway to oryzine B and oryzine A, however, hydroxylation of the diene by the alpha-ketoglutarate-dependent dioxygenase oryG and lactonisation by the lactonohydrolases oryH or oryL could give oryzine B directly. Finally, enoyl reduction by the dehydrogenase oryD would then convert oryzine B into oryzine A. This chain is Lactonohydrolase oryH, found in Aspergillus oryzae (strain ATCC 42149 / RIB 40) (Yellow koji mold).